The chain runs to 214 residues: Redox-sensing transcriptional repressor Rex (214 aa).

Positions 17-56 form a DNA-binding region, H-T-H motif; that stretch reads LYYRIFKRFHADQVEKASSKQIADAMGIDSATVRRDFSYF. 91-96 contributes to the NAD(+) binding site; it reads GCGNIG.

Belongs to the transcriptional regulatory Rex family. As to quaternary structure, homodimer.

The protein localises to the cytoplasm. In terms of biological role, modulates transcription in response to changes in cellular NADH/NAD(+) redox state. This chain is Redox-sensing transcriptional repressor Rex, found in Streptococcus pyogenes serotype M1.